Consider the following 1066-residue polypeptide: Beta-galactosidase (1066 aa).

Asn-110 and Asp-209 together coordinate substrate. Na(+) is bound at residue Asp-209. Residues Glu-432, His-434, and Glu-477 each contribute to the Mg(2+) site. Residues Glu-477 and 553–556 (EYAH) contribute to the substrate site. Glu-477 functions as the Proton donor in the catalytic mechanism. Glu-553 acts as the Nucleophile in catalysis. Mg(2+) is bound at residue Asn-613. Na(+) contacts are provided by Phe-617 and Asn-620. Residues Asn-620 and Trp-1041 each coordinate substrate.

Belongs to the glycosyl hydrolase 2 family. As to quaternary structure, homotetramer. Requires Mg(2+) as cofactor. It depends on Na(+) as a cofactor.

It carries out the reaction Hydrolysis of terminal non-reducing beta-D-galactose residues in beta-D-galactosides.. This Yersinia pseudotuberculosis serotype IB (strain PB1/+) protein is Beta-galactosidase.